The following is a 1848-amino-acid chain: Unconventional myosin-Vb (1848 aa).

N-acetylmethionine is present on M1. Positions 8-60 (SQCTRVWIPDPDEVWRSAELTKDYKEGDKSLQLRLEDETILEYPIDVQRNQLP) constitute a Myosin N-terminal SH3-like domain. The interval 21-40 (VWRSAELTKDYKEGDKSLQL) is requires for interaction with LIMA1. The 693-residue stretch at 69–761 (VGENDLTALS…QVAYLEKLRA (693 aa)) folds into the Myosin motor domain. Position 163-170 (163-170 (GESGAGKT)) interacts with ATP. The tract at residues 596 to 630 (KDPVPATTPGKGSSSKISVRSARPPMKVSNKEHKK) is disordered. The tract at residues 640–662 (LHLLMETLNATTPHYVRCIKPND) is actin-binding. 6 consecutive IQ domains span residues 769–798 (IMIQ…QRYC), 792–821 (LTLQ…VLQK), 817–848 (VVLQ…FTRA), 840–869 (VVIQ…TIQK), 865–896 (TTIQ…AFRM), and 888–917 (IVIQ…EHLK). Coiled-coil stretches lie at residues 899 to 1266 (ARRE…ILRT) and 1341 to 1471 (RLLE…GMLE). Disordered regions lie at residues 1093 to 1123 (QTPG…EIGD) and 1166 to 1192 (QLEK…LDPN). Over residues 1101-1121 (PSNQSSLESDSNYPSISTSEI) the composition is skewed to polar residues. The segment covering 1166-1179 (QLEKREQQDSKKVQ) has biased composition (basic and acidic residues). At S1446 the chain carries Phosphoserine. In terms of domain architecture, Dilute spans 1526-1803 (TSTINGIKKV…IRTIQAQLQE (278 aa)).

This sequence belongs to the TRAFAC class myosin-kinesin ATPase superfamily. Myosin family. In terms of assembly, component of the CART complex, at least composed of ACTN4, HGS/HRS, MYO5B and TRIM3. Interacts with RAB11FIP2, RAB11A, and RAB8A. Found in a complex with CFTR and RAB11A. Interacts with NPC1L1;. Interacts with LIMA1.

The protein localises to the cytoplasm. Functionally, may be involved in vesicular trafficking via its association with the CART complex. The CART complex is necessary for efficient transferrin receptor recycling but not for EGFR degradation. Required in a complex with RAB11A and RAB11FIP2 for the transport of NPC1L1 to the plasma membrane. Together with RAB11A participates in CFTR trafficking to the plasma membrane and TF (transferrin) recycling in nonpolarized cells. Together with RAB11A and RAB8A participates in epithelial cell polarization. Together with RAB25 regulates transcytosis. Required for proper localization of bile salt export pump ABCB11 at the apical/canalicular plasma membrane of hepatocytes. The protein is Unconventional myosin-Vb (MYO5B) of Homo sapiens (Human).